The following is a 235-amino-acid chain: Probable ribosomal RNA small subunit methyltransferase A (235 aa).

Residues His-9, Leu-11, Gly-34, Glu-55, Asp-78, and Asn-93 each coordinate S-adenosyl-L-methionine.

Belongs to the class I-like SAM-binding methyltransferase superfamily. rRNA adenine N(6)-methyltransferase family. RsmA subfamily.

The protein resides in the cytoplasm. Specifically dimethylates two adjacent adenosines in the loop of a conserved hairpin near the 3'-end of 16S rRNA in the 30S particle. May play a critical role in biogenesis of 30S subunits. The sequence is that of Probable ribosomal RNA small subunit methyltransferase A from Pyrobaculum islandicum (strain DSM 4184 / JCM 9189 / GEO3).